Here is a 932-residue protein sequence, read N- to C-terminus: Envelope glycoprotein B (932 aa).

A compositionally biased stretch (low complexity) spans 1 to 12 (MAARGGAERAAG). 2 disordered regions span residues 1 to 25 (MAARGGAERAAGAGDGRRGQRRHLR) and 67 to 105 (GRPATTPPAPPPEEAASPAPPASPSPPGPDGDDAASPDN). An N-terminal signal peptide occupies residues 1 to 62 (MAARGGAERA…LWATWALLLA (62 aa)). Residues 63–806 (APAAGRPATT…SGIASFIANP (744 aa)) lie on the Virion surface side of the membrane. Residues 71–95 (TTPPAPPPEEAASPAPPASPSPPGP) are compositionally biased toward pro residues. N-linked (GlcNAc...) asparagine; by host glycosylation is found at N105 and N153. 5 disulfides stabilise this stretch: C128–C607, C145–C563, C218–C282, C375–C423, and C628–C665. 2 involved in fusion and/or binding to host membrane regions span residues 184-190 (TWAGSTY) and 269-276 (GSAGLYRT). N-linked (GlcNAc...) asparagine; by host glycosylation is found at N441 and N483. A disordered region spans residues 492–527 (AAAPKPGPRRARRAAPSAPGGPGAANGPAGDGDAGG). The segment covering 511–526 (GGPGAANGPAGDGDAG) has biased composition (gly residues). N-linked (GlcNAc...) asparagine; by host glycans are attached at residues N640 and N706. 2 hydrophobic membrane proximal region regions span residues 751 to 804 (IDRV…SFIA) and 784 to 804 (VVLGAAGAALSTVSGIASFIA). The helical transmembrane segment at 807-827 (FGALATGLLVLAGLVAAFLAY) threads the bilayer. At 828 to 932 (RYISRLRSNP…QLPMADVGGA (105 aa)) the chain is on the intravirion side. Positions 880 to 883 (YMSL) match the Golgi targeting motif. Positions 921 to 924 (YQQL) match the Internalization motif motif.

The protein belongs to the herpesviridae glycoprotein B family. Homotrimer; disulfide-linked. Binds to heparan sulfate proteoglycans. Interacts with gH/gL heterodimer. Post-translationally, a proteolytic cleavage by host furin generates two subunits that remain linked by disulfide bonds.

The protein localises to the virion membrane. Its subcellular location is the host cell membrane. The protein resides in the host endosome membrane. It is found in the host Golgi apparatus membrane. Envelope glycoprotein that forms spikes at the surface of virion envelope. Essential for the initial attachment to heparan sulfate moieties of the host cell surface proteoglycans. Involved in fusion of viral and cellular membranes leading to virus entry into the host cell. Following initial binding to its host receptors, membrane fusion is mediated by the fusion machinery composed at least of gB and the heterodimer gH/gL. May be involved in the fusion between the virion envelope and the outer nuclear membrane during virion egress. This is Envelope glycoprotein B from Bos taurus (Bovine).